The primary structure comprises 161 residues: 3-hydroxyacyl-[acyl-carrier-protein] dehydratase FabZ (161 aa).

Residue histidine 55 is part of the active site.

It belongs to the thioester dehydratase family. FabZ subfamily.

Its subcellular location is the cytoplasm. The catalysed reaction is a (3R)-hydroxyacyl-[ACP] = a (2E)-enoyl-[ACP] + H2O. Its function is as follows. Involved in unsaturated fatty acids biosynthesis. Catalyzes the dehydration of short chain beta-hydroxyacyl-ACPs and long chain saturated and unsaturated beta-hydroxyacyl-ACPs. In Jannaschia sp. (strain CCS1), this protein is 3-hydroxyacyl-[acyl-carrier-protein] dehydratase FabZ.